The sequence spans 228 residues: MVSAMPRPLHEIMESGWAEALEPVADRIAQMGDFLRQEVAEGRTYLPAGENVLRAFQQPFDQVRVLLVGQDPYPTPGHAVGLSFSVSPEVRRLPGSLRNIFLEYTQDLGYPMPSSGDLTPWAERGVLLLNRVLTVTPRKPGSHRGKGWEAVTDQAIRALAARGKPLVAILWGRDARSLRPLMPDVPCVESAHPSPMSAHHGFFGSRPFSRANALLEQQGAEPMDWRLP.

Asp-71 serves as the catalytic Proton acceptor.

Belongs to the uracil-DNA glycosylase (UDG) superfamily. UNG family.

Its subcellular location is the cytoplasm. The enzyme catalyses Hydrolyzes single-stranded DNA or mismatched double-stranded DNA and polynucleotides, releasing free uracil.. Functionally, excises uracil residues from the DNA which can arise as a result of misincorporation of dUMP residues by DNA polymerase or due to deamination of cytosine. This is Uracil-DNA glycosylase from Thermobifida fusca (strain YX).